The sequence spans 962 residues: CRACD-like protein (962 aa).

Disordered regions lie at residues 38–102, 131–174, and 212–871; these read GKKK…PESG, NVKM…HDVG, and PAES…QEPV. A compositionally biased stretch (polar residues) spans 46 to 61; the sequence is PSSTGSSTWKQSQTRN. Position 92 is a phosphoserine (Ser-92). Basic residues predominate over residues 224–244; that stretch reads AKHKLQVKPRNQRSSKMRRLS. Polar residues predominate over residues 245–256; it reads SRAQSESLSDLT. The span at 266–278 shows a compositional bias: basic and acidic residues; the sequence is EKPLLEVSPEERP. Composition is skewed to pro residues over residues 292-303 and 354-365; these read EPGPPAPLPPPG and PPSPPEGPPNPG. The span at 407 to 425 shows a compositional bias: low complexity; that stretch reads PEGDTTPPETDPAATSEAP. Basic and acidic residues-rich tracts occupy residues 429 to 440 and 459 to 480; these read DGPERSVPKEAE and EPEREAETEPERGAGTEPERIG. Ser-490 is modified (phosphoserine). Over residues 503–521 the composition is skewed to low complexity; it reads AAASEGPAASPPLAAAESP. 4 stretches are compositionally biased toward basic and acidic residues: residues 536 to 546, 555 to 570, 631 to 642, and 709 to 728; these read APERPKAERAE, AAPERKAERGGAELRG, KLAERGPQDSGD, and YSAEVRLERSLTVLPKEEKC. Over residues 753–764 the composition is skewed to pro residues; sequence PEPLSSKPPLPR. Basic and acidic residues-rich tracts occupy residues 784–806 and 844–869; these read PGEREPRKEPRTAEKRPLRRGAE and QEDKPGARTLKSEPGKQAKVPERGQE.

The protein is CRACD-like protein of Homo sapiens (Human).